We begin with the raw amino-acid sequence, 145 residues long: MLSIIQRVNCANVVVDNQKVADINKGILALVCVEKEDTQQNFEKMADKIIKYRIFEDDAGKMNLSLADIDAEIILVPQFTLAADTKKGNRPSFSSGCPPEIAKEKFKEFENIFRRKYNKVQTGIFGADMKVSLTNDGPVTFSFKI.

A Gly-cisPro motif, important for rejection of L-amino acids motif is present at residues 137–138 (GP).

Belongs to the DTD family. As to quaternary structure, homodimer.

The protein localises to the cytoplasm. It carries out the reaction glycyl-tRNA(Ala) + H2O = tRNA(Ala) + glycine + H(+). The enzyme catalyses a D-aminoacyl-tRNA + H2O = a tRNA + a D-alpha-amino acid + H(+). Its function is as follows. An aminoacyl-tRNA editing enzyme that deacylates mischarged D-aminoacyl-tRNAs. Also deacylates mischarged glycyl-tRNA(Ala), protecting cells against glycine mischarging by AlaRS. Acts via tRNA-based rather than protein-based catalysis; rejects L-amino acids rather than detecting D-amino acids in the active site. By recycling D-aminoacyl-tRNA to D-amino acids and free tRNA molecules, this enzyme counteracts the toxicity associated with the formation of D-aminoacyl-tRNA entities in vivo and helps enforce protein L-homochirality. In Francisella tularensis subsp. novicida (strain U112), this protein is D-aminoacyl-tRNA deacylase.